A 333-amino-acid chain; its full sequence is DNA repair and recombination protein RadA (333 aa).

ATP is bound at residue 127–134 (GEFGSGKT).

This sequence belongs to the eukaryotic RecA-like protein family.

Functionally, involved in DNA repair and in homologous recombination. Binds and assemble on single-stranded DNA to form a nucleoprotein filament. Hydrolyzes ATP in a ssDNA-dependent manner and promotes DNA strand exchange between homologous DNA molecules. This is DNA repair and recombination protein RadA from Pyrobaculum aerophilum (strain ATCC 51768 / DSM 7523 / JCM 9630 / CIP 104966 / NBRC 100827 / IM2).